The primary structure comprises 1043 residues: Isoleucine--tRNA ligase (1043 aa).

The 'HIGH' region signature appears at Pro48–His58. A 'KMSKS' region motif is present at residues Lys591–Arg595. Lys594 provides a ligand contact to ATP.

Belongs to the class-I aminoacyl-tRNA synthetase family. IleS type 2 subfamily. As to quaternary structure, monomer. Requires Zn(2+) as cofactor.

It localises to the cytoplasm. The enzyme catalyses tRNA(Ile) + L-isoleucine + ATP = L-isoleucyl-tRNA(Ile) + AMP + diphosphate. Catalyzes the attachment of isoleucine to tRNA(Ile). As IleRS can inadvertently accommodate and process structurally similar amino acids such as valine, to avoid such errors it has two additional distinct tRNA(Ile)-dependent editing activities. One activity is designated as 'pretransfer' editing and involves the hydrolysis of activated Val-AMP. The other activity is designated 'posttransfer' editing and involves deacylation of mischarged Val-tRNA(Ile). The polypeptide is Isoleucine--tRNA ligase (Chlamydia pneumoniae (Chlamydophila pneumoniae)).